Consider the following 713-residue polypeptide: Polyribonucleotide nucleotidyltransferase (713 aa).

Positions 491 and 497 each coordinate Mg(2+). The 60-residue stretch at 558-617 (PRMITIKINPEKIRDVIGKGGSVIRALTEETGTTIDISDDGVVTIASTSSDGMAEAKKRI) folds into the KH domain. Residues 627–695 (GQVYEGTVLK…EKGRVRLSAK (69 aa)) form the S1 motif domain.

The protein belongs to the polyribonucleotide nucleotidyltransferase family. Requires Mg(2+) as cofactor.

The protein localises to the cytoplasm. It carries out the reaction RNA(n+1) + phosphate = RNA(n) + a ribonucleoside 5'-diphosphate. Functionally, involved in mRNA degradation. Catalyzes the phosphorolysis of single-stranded polyribonucleotides processively in the 3'- to 5'-direction. The sequence is that of Polyribonucleotide nucleotidyltransferase from Burkholderia cenocepacia (strain ATCC BAA-245 / DSM 16553 / LMG 16656 / NCTC 13227 / J2315 / CF5610) (Burkholderia cepacia (strain J2315)).